The following is a 210-amino-acid chain: Uracil phosphoribosyltransferase (210 aa).

5-phospho-alpha-D-ribose 1-diphosphate is bound by residues Arg78, Arg103, and 130–138; that span reads DPMLATGGT. Uracil contacts are provided by residues Ile193 and 198–200; that span reads GDA. Residue Asp199 participates in 5-phospho-alpha-D-ribose 1-diphosphate binding.

It belongs to the UPRTase family. Mg(2+) is required as a cofactor.

The catalysed reaction is UMP + diphosphate = 5-phospho-alpha-D-ribose 1-diphosphate + uracil. It participates in pyrimidine metabolism; UMP biosynthesis via salvage pathway; UMP from uracil: step 1/1. Allosterically activated by GTP. Its function is as follows. Catalyzes the conversion of uracil and 5-phospho-alpha-D-ribose 1-diphosphate (PRPP) to UMP and diphosphate. This is Uracil phosphoribosyltransferase from Stenotrophomonas maltophilia (strain R551-3).